Consider the following 584-residue polypeptide: ATP-dependent ubiquitin transferase-like protein Cap2 (584 aa).

Positions 1–137 (MKQELHHTLL…SGTSNDVELE (137 aa)) are E2-like domain. The active-site For E2-like domain is the Cys-90. Positions 138–338 (GEFSAYWQSE…LLSRNQSRPD (201 aa)) are linker domain. The adenylation plus E1-like domain stretch occupies residues 339–584 (VGNLSQKRIA…RFSGCNICDE (246 aa)). Catalysis depends on Cys-522, which acts as the For E1-like domain.

It in the C-terminal section; belongs to the HesA/MoeB/ThiF family. In terms of assembly, interacts with CD-NTase DncV in the presence and absence of phage T2. A Cap2 dimer is bound on either side by a DncV monomer.

Its function is as follows. CD-NTase priming component of a CBASS antiviral system. CBASS (cyclic oligonucleotide-based antiphage signaling system) provides immunity against bacteriophages. The CD-NTase protein (DncV) synthesizes cyclic nucleotides in response to infection; these serve as specific second messenger signals. The signals activate a diverse range of effectors, leading to bacterial cell death and thus abortive phage infection. A type II-A(GA) CBASS system. In terms of biological role, primes DncV; acts as a protein transferase, conjugating DncV, the CD-NTase, to unidentified target(s) in the cell via an E1-E2 ubiquitin transferase-like mechanism. During the conjugation reaction DncV is probably transiently attached to AMP. Protein conjugation requires ATP. Functionally, protects E.coli against phage infection. When the CBASS operon (capV-dncV-cap2-cap3) is introduced in E.coli MG1655 there is about 100-fold protection against phages P1 and T2. When the operon is introduced in E.coli MG1655 there is a more than 10(3) decrease in the efficiency of T2 plaque formation. Protects 100-fold against phage T5, offers no protection against T7. When the operon is introduced in E.coli MG1655 it protects against phages T2, T4, T5 and T6. Another paper shows the operon confers protection against phages P1, T2, T5 and T6 but not T4 or lambda. The sequence is that of ATP-dependent ubiquitin transferase-like protein Cap2 from Vibrio cholerae serotype O1 (strain ATCC 39315 / El Tor Inaba N16961).